Here is a 199-residue protein sequence, read N- to C-terminus: UPF0301 protein Anae109_0457 (199 aa).

This sequence belongs to the UPF0301 (AlgH) family.

The polypeptide is UPF0301 protein Anae109_0457 (Anaeromyxobacter sp. (strain Fw109-5)).